The following is a 166-amino-acid chain: Regulator of ribonuclease activity A (166 aa).

The protein belongs to the RraA family. As to quaternary structure, homotrimer. Binds to both RNA-binding sites in the C-terminal region of Rne and to RhlB.

It localises to the cytoplasm. Its function is as follows. Globally modulates RNA abundance by binding to RNase E (Rne) and regulating its endonucleolytic activity. Can modulate Rne action in a substrate-dependent manner by altering the composition of the degradosome. Modulates RNA-binding and helicase activities of the degradosome. The chain is Regulator of ribonuclease activity A from Histophilus somni (strain 2336) (Haemophilus somnus).